Reading from the N-terminus, the 140-residue chain is Large ribosomal subunit protein uL11 (140 aa).

It belongs to the universal ribosomal protein uL11 family. As to quaternary structure, part of the ribosomal stalk of the 50S ribosomal subunit. Interacts with L10 and the large rRNA to form the base of the stalk. L10 forms an elongated spine to which L12 dimers bind in a sequential fashion forming a multimeric L10(L12)X complex. One or more lysine residues are methylated.

In terms of biological role, forms part of the ribosomal stalk which helps the ribosome interact with GTP-bound translation factors. The protein is Large ribosomal subunit protein uL11 of Pelobacter propionicus (strain DSM 2379 / NBRC 103807 / OttBd1).